Here is a 483-residue protein sequence, read N- to C-terminus: MGSQPTNSHFTLNEQTLCGTNISLLGNNRFIQIGNGLHMTYAPGFFGNWSRDLTIGPRFGGLNKQPIHVPPKRTETASIQVTPRSIVINRMNNIQINPTSIGNPQVTIRLPLNNFKSTTQLIQQVSLTDFFRPDIEHAGSIVLILRHPSDMIGEANTLTQAGRDPDVLLEGLRNLFNACTAPWTVGEGGGLRAYVTSLSFIAACRAEEYTDKQAADANRTAIVSAYGCSRMETRLIRFSECLRAMVQCHVFPHRFISFFGSLLEYTIQDNLCNITAVAKGPQEAARTDKTSTRRVTANIPACVFWDVDKDLHLSADGLKHVFLVFVYTQRRQREGVRLHLALSQLNEQCFGRGIGFLLGRIRAENAAWGTEGVANTHQPYNTRALPLVQLSNDPTSPRCSIGEITGVNWNLARQRLYQWTGDFRGLPTQLSCMYAAYTLIGTIPSESVRYTRRMERFGGYNVPTIWLEGVVWGGTNTWNECYY.

Positions 24 to 40 (LLGNNRFIQIGNGLHMT) match the RIP homotypic interaction motif (RHIM) motif.

The protein belongs to the herpesviridae TRX1 protein family. Interacts with TRX2, MCP and capsid vertex component 2/CVC2. Self-assembles into homo-oligomeric amyloid fibrils. Interacts with host ZBP1; this interaction prevents host necroptosis and extrinsic apoptosis. Interacts with host RIPK3.

The protein resides in the virion. It is found in the host nucleus. Structural component of the T=16 icosahedral capsid. The capsid is composed of pentamers and hexamers of major capsid protein/MCP, which are linked together by heterotrimers called triplexes. These triplexes are formed by a single molecule of triplex protein 1/TRX1 and two copies of triplex protein 2/TRX2. Additionally, TRX1 is required for efficient transport of TRX2 to the nucleus, which is the site of capsid assembly. Also prevents necroptosis and extrinsic apoptosis by sequestering host ZBP1 into large, insoluble supercomplexes and impairing its ability to interact with RIPK3. The polypeptide is Triplex capsid protein 1 (Varicella-zoster virus (strain Dumas) (HHV-3)).